The following is a 1505-amino-acid chain: Probable serine/threonine-protein kinase irlD (1505 aa).

Residues 1–18 (MGPKKGKRSHSKNHHHHN) are compositionally biased toward basic residues. Disordered regions lie at residues 1 to 30 (MGPK…NSGG), 121 to 211 (IPQP…NNIL), 548 to 571 (TTTT…DKEN), and 862 to 1013 (EENE…TIAT). Residues 139–158 (SISTTTTTTTATAIEIESSS) show a composition bias toward low complexity. The segment covering 159–172 (GLTSNITDSTEIQL) has biased composition (polar residues). Low complexity-rich tracts occupy residues 173-209 (DSTT…NSNN) and 548-561 (TTTT…TTTT). Composition is skewed to basic and acidic residues over residues 562–571 (IDKDEKDKEN) and 862–882 (EENE…EKKK). Residues 846 to 892 (IRTEESLKAEKDLLEQEENEKKRLKEKRKKEEKEKKKQQNLKQKSLI) adopt a coiled-coil conformation. The span at 896-924 (TTTTTTTTPIPITVPIPTQTQTPTQTPTQ) shows a compositional bias: low complexity. A compositionally biased stretch (pro residues) spans 925-943 (TPIPTPIPTTPIPTTPIPI). Composition is skewed to low complexity over residues 944 to 954 (PIQLTPTTPKT) and 960 to 977 (TPKT…KTPK). Residues 978–989 (NSTLDKQTISTP) are compositionally biased toward polar residues. In terms of domain architecture, Protein kinase spans 1054 to 1324 (RKDEFIIGRG…TENILLHPFF (271 aa)). Residues 1060–1068 (IGRGSNGTL) and K1083 each bind ATP. The Proton acceptor role is filled by D1194. The KEN domain maps to 1327 to 1505 (HEKKVKFIDA…LIYFNDLIIK (179 aa)).

It belongs to the protein kinase superfamily. Ser/Thr protein kinase family.

The enzyme catalyses L-seryl-[protein] + ATP = O-phospho-L-seryl-[protein] + ADP + H(+). The catalysed reaction is L-threonyl-[protein] + ATP = O-phospho-L-threonyl-[protein] + ADP + H(+). The protein is Probable serine/threonine-protein kinase irlD (irlD) of Dictyostelium discoideum (Social amoeba).